Reading from the N-terminus, the 155-residue chain is MADKPIAKALRNVLVLHGPNLNLLGTREPEVYGATTLADINTALVERATARGVTLAHFQSNHEGALVDRIHAAKSEGIEFIIINPAAYTHTSVALRDALAGVVIPYIEVHLSNVHRREPFRHHSYLADQAVGVICGLGWRGYLAALDFAIDQHGG.

Residue Tyr-32 is the Proton acceptor of the active site. Residues Asn-84, His-90, and Asp-97 each coordinate substrate. Catalysis depends on His-110, which acts as the Proton donor. Substrate contacts are provided by residues 111–112 and Arg-121; that span reads LS.

The protein belongs to the type-II 3-dehydroquinase family. Homododecamer.

It catalyses the reaction 3-dehydroquinate = 3-dehydroshikimate + H2O. It functions in the pathway metabolic intermediate biosynthesis; chorismate biosynthesis; chorismate from D-erythrose 4-phosphate and phosphoenolpyruvate: step 3/7. Functionally, catalyzes a trans-dehydration via an enolate intermediate. The chain is 3-dehydroquinate dehydratase from Ralstonia pickettii (strain 12J).